A 692-amino-acid chain; its full sequence is Elongation factor G (692 aa).

A tr-type G domain is found at Asp-8–Ser-283. GTP contacts are provided by residues Ala-17–Thr-24, Asp-81–His-85, and Asn-135–Asp-138.

It belongs to the TRAFAC class translation factor GTPase superfamily. Classic translation factor GTPase family. EF-G/EF-2 subfamily.

It is found in the cytoplasm. Its function is as follows. Catalyzes the GTP-dependent ribosomal translocation step during translation elongation. During this step, the ribosome changes from the pre-translocational (PRE) to the post-translocational (POST) state as the newly formed A-site-bound peptidyl-tRNA and P-site-bound deacylated tRNA move to the P and E sites, respectively. Catalyzes the coordinated movement of the two tRNA molecules, the mRNA and conformational changes in the ribosome. The chain is Elongation factor G from Magnetococcus marinus (strain ATCC BAA-1437 / JCM 17883 / MC-1).